The following is a 392-amino-acid chain: Major outer membrane protein P.IA (392 aa).

The first 19 residues, 1-19 (MRKKLTALVLSALPLAAVA), serve as a signal peptide directing secretion.

The protein belongs to the Gram-negative porin family. In terms of assembly, homotrimer.

It is found in the cell outer membrane. Its function is as follows. Serves as a slightly cation selective porin. Major antigen on the gonococcal cell surface and it may have pathogenic properties in addition to its porin activity. The polypeptide is Major outer membrane protein P.IA (porA) (Neisseria meningitidis serogroup B / serotype 15 (strain H44/76)).